A 588-amino-acid polypeptide reads, in one-letter code: Hyaluronan synthase 1 (588 aa).

The Cytoplasmic segment spans residues 1–28 (MKEKAAETMEIPEGIPKDLEPKHPTLWR). Residues 29-49 (IIYYSFGVVLLATITAAYVAE) form a helical membrane-spanning segment. The Extracellular portion of the chain corresponds to 50-61 (FQVLKHEAILFS). The chain crosses the membrane as a helical span at residues 62 to 82 (LGLYGLAMLLHLMMQSLFAFL). Residues 83–411 (EIRRVNKSEL…IWMTYESVVS (329 aa)) lie on the Cytoplasmic side of the membrane. A helical transmembrane segment spans residues 412–432 (FIFPFFITATVIRLIYAGTIW). Position 433 (Asn-433) is a topological domain, extracellular. Residues 434-454 (VVWLLLCIQIMSLFKSIYACW) traverse the membrane as a helical segment. At 455–456 (LR) the chain is on the cytoplasmic side. The chain crosses the membrane as a helical span at residues 457–477 (GNFIMLLMSLYSMLYMTGLLP). Over 478–505 (SKYFALLTLNKTGWGTSGRKKIVGNYMP) the chain is Extracellular. The helical transmembrane segment at 506 to 526 (ILPLSIWAAVLCGGVGYSIYM) threads the bilayer. The Cytoplasmic portion of the chain corresponds to 527 to 543 (DCQNDWSTPEKQKEMYH). A helical membrane pass occupies residues 544-564 (LLYGCVGYVMYWVIMAVMYWV). Residues 565 to 588 (WVKRCCRKRSQTVTLVHDIPDMCV) are Extracellular-facing.

The protein belongs to the NodC/HAS family. It depends on Mg(2+) as a cofactor. In terms of tissue distribution, expression moves as a gradient through the embryo. The mRNA is first expressed in the animal region of the blastula, and by early gastrula is found everywhere except in the outer layer of the dorsal blastopore lip. By mid-gastrula, protein is present in the inner ectodermal layer and the endoderm, then disappears from dorsal ectoderm as the neural plate is induced and later decays in a dorsoventral direction. Last expressed in ventral regions of the gut at the tailbud stage (at protein level).

Its subcellular location is the membrane. The catalysed reaction is [hyaluronan](n) + UDP-N-acetyl-alpha-D-glucosamine = N-acetyl-beta-D-glucosaminyl-(1-&gt;4)-[hyaluronan](n) + UDP + H(+). The enzyme catalyses N-acetyl-beta-D-glucosaminyl-(1-&gt;4)-[hyaluronan](n) + UDP-alpha-D-glucuronate = [hyaluronan](n+1) + UDP + H(+). Its pathway is glycan biosynthesis; hyaluronan biosynthesis. Catalyzes the addition of GlcNAc or GlcUA monosaccharides to the nascent hyaluronan polymer. Therefore, it is essential to hyaluronan synthesis a major component of most extracellular matrices that has a structural role in tissues architectures and regulates cell adhesion, migration and differentiation. Also able to catalyze the synthesis of chito-oligosaccharide depending on the substrate. This chain is Hyaluronan synthase 1 (has1), found in Xenopus laevis (African clawed frog).